The chain runs to 186 residues: UPF0397 protein LCABL_04350 (186 aa).

5 consecutive transmembrane segments (helical) span residues 12 to 32 (VVAIGIGTAILFILKRFAVIP), 45 to 65 (GFLGFIATLFGPIAGFFIGFL), 77 to 97 (TPWWTWVFTTGLVGMVIGLFW), 112 to 132 (IVSFNLLQIITNVVSWSLIAP), and 150 to 170 (GIVSAISNSIATGVIGTILLV).

Belongs to the UPF0397 family.

It localises to the cell membrane. The protein is UPF0397 protein LCABL_04350 of Lacticaseibacillus casei (strain BL23) (Lactobacillus casei).